A 148-amino-acid chain; its full sequence is Putative antiporter subunit mnhG2 (148 aa).

3 consecutive transmembrane segments (helical) span residues 11-31, 51-71, and 72-92; these read IAAI…IGLI, VLLT…YLSV, and RLIL…HLIS. A disordered region spans residues 125 to 148; the sequence is EQLKQRAHEREERRRKTYEKEHDY. Positions 127-148 are enriched in basic and acidic residues; that stretch reads LKQRAHEREERRRKTYEKEHDY.

It belongs to the CPA3 antiporters (TC 2.A.63) subunit G family. May form a heterooligomeric complex that consists of seven subunits: mnhA2, mnhB2, mnhC2, mnhD2, mnhE2, mnhF2 and mnhG2.

It is found in the cell membrane. The chain is Putative antiporter subunit mnhG2 (mnhG2) from Staphylococcus saprophyticus subsp. saprophyticus (strain ATCC 15305 / DSM 20229 / NCIMB 8711 / NCTC 7292 / S-41).